We begin with the raw amino-acid sequence, 1333 residues long: DNA-directed RNA polymerase subunit beta' (1333 aa).

Positions 60, 62, 75, and 78 each coordinate Zn(2+). Mg(2+) contacts are provided by Asp535, Asp537, and Asp539. Residues Cys901, Cys983, Cys990, and Cys993 each coordinate Zn(2+).

The protein belongs to the RNA polymerase beta' chain family. As to quaternary structure, the RNAP catalytic core consists of 2 alpha, 1 beta, 1 beta' and 1 omega subunit. When a sigma factor is associated with the core the holoenzyme is formed, which can initiate transcription. It depends on Mg(2+) as a cofactor. Zn(2+) serves as cofactor.

It carries out the reaction RNA(n) + a ribonucleoside 5'-triphosphate = RNA(n+1) + diphosphate. Its function is as follows. DNA-dependent RNA polymerase catalyzes the transcription of DNA into RNA using the four ribonucleoside triphosphates as substrates. The protein is DNA-directed RNA polymerase subunit beta' of Corynebacterium glutamicum (strain R).